Reading from the N-terminus, the 599-residue chain is MQQEAAQRESEELQRVQWQPRRVRGWGVPKLLWFLVFLQPVITELHLRRRNVRFLFIRFSAWQYAGTDKLWAGLVTTLCEGIRHHYGALPFSVYSVLGNKPCGPRDGLCQREWHCRRRVCLALLALLAALCLGVGLLYLSLGGHAPGHGERGVLKALGGAATTLSGSGLLMAVYSVGKHLFVSQRKKIERLVSREKFGSQLGFMCEVKKEVELLTDFLCFLEIYQRRRLRVVLEVTGLDTCYPERVVGVLNAINTLLSDSHAPFIFILVVDPSILAACLESAGNMKGTADNGYLFLNRTVTLPFSVPIMGRRTKLQFLHDAVRSRDDLLFRELTIKLQPQSPGNLGAGEGTQLLAVETQGDAERTQGRVDAEAARRIQEALCCLHDEGDCLYEYVPDNVVSMRRIVNTVPITVRLLQQQQQQQPDRVGPTPRHAVAWVVLANQWPCRLSWVLQCLEDRQQAGGAPEGRSRLWDVFCDNSRELHTMTKALQNVLDLDGDPELFERFLGTDFPFTVAEAQSLLRCTVNLDHSIRRRMGLIRAVSALKPPSPPKSPSQDGPQASPRAIIAAGTSHAGQGSGHSKEAHQTRDRTHGGKPRPMA.

One can recognise a KAP NTPase domain in the interval 1 to 416 (MQQEAAQRES…NTVPITVRLL (416 aa)). 3 consecutive transmembrane segments (helical) span residues 25-45 (GWGV…ITEL), 119-139 (VCLA…LLYL), and 156-176 (ALGG…VYSV). Positions 543–599 (ALKPPSPPKSPSQDGPQASPRAIIAAGTSHAGQGSGHSKEAHQTRDRTHGGKPRPMA) are disordered. Positions 579–591 (HSKEAHQTRDRTH) are enriched in basic and acidic residues.

The protein resides in the membrane. The polypeptide is NTPase KAP family P-loop domain-containing protein 1 (Nkpd1) (Mus musculus (Mouse)).